A 236-amino-acid chain; its full sequence is Small ribosomal subunit protein uS3 (236 aa).

The 69-residue stretch at 39–107 (IREFLTEELK…DTSLNIVEVR (69 aa)) folds into the KH type-2 domain. The segment at 214 to 236 (ASERRAVEGDNQGSSSNRRRENA) is disordered.

The protein belongs to the universal ribosomal protein uS3 family. Part of the 30S ribosomal subunit. Forms a tight complex with proteins S10 and S14.

In terms of biological role, binds the lower part of the 30S subunit head. Binds mRNA in the 70S ribosome, positioning it for translation. In Brucella anthropi (strain ATCC 49188 / DSM 6882 / CCUG 24695 / JCM 21032 / LMG 3331 / NBRC 15819 / NCTC 12168 / Alc 37) (Ochrobactrum anthropi), this protein is Small ribosomal subunit protein uS3.